A 163-amino-acid chain; its full sequence is ATP synthase subunit b 1 (163 aa).

The chain crosses the membrane as a helical span at residues A7–V27.

Belongs to the ATPase B chain family. In terms of assembly, F-type ATPases have 2 components, F(1) - the catalytic core - and F(0) - the membrane proton channel. F(1) has five subunits: alpha(3), beta(3), gamma(1), delta(1), epsilon(1). F(0) has three main subunits: a(1), b(2) and c(10-14). The alpha and beta chains form an alternating ring which encloses part of the gamma chain. F(1) is attached to F(0) by a central stalk formed by the gamma and epsilon chains, while a peripheral stalk is formed by the delta and b chains.

Its subcellular location is the cell inner membrane. F(1)F(0) ATP synthase produces ATP from ADP in the presence of a proton or sodium gradient. F-type ATPases consist of two structural domains, F(1) containing the extramembraneous catalytic core and F(0) containing the membrane proton channel, linked together by a central stalk and a peripheral stalk. During catalysis, ATP synthesis in the catalytic domain of F(1) is coupled via a rotary mechanism of the central stalk subunits to proton translocation. Functionally, component of the F(0) channel, it forms part of the peripheral stalk, linking F(1) to F(0). In Rhodopseudomonas palustris (strain HaA2), this protein is ATP synthase subunit b 1.